The sequence spans 261 residues: Chanoclavine-I dehydrogenase easD (261 aa).

Positions 1–20 (MPSMTSKVFAITGGASGIGA) are cleaved as a signal peptide. Position 18 (I18) interacts with NADP(+). N-linked (GlcNAc...) asparagine glycosylation occurs at N43. 5 residues coordinate NADP(+): D66, R132, Y166, K170, and T201. Y166 acts as the Proton donor in catalysis. K170 (lowers pKa of active site Tyr) is an active-site residue.

It belongs to the short-chain dehydrogenases/reductases (SDR) family. Homotetramer.

It carries out the reaction chanoclavine-I + NAD(+) = chanoclavine-I aldehyde + NADH + H(+). It functions in the pathway alkaloid biosynthesis; ergot alkaloid biosynthesis. Chanoclavine-I dehydrogenase; part of the gene cluster that mediates the biosynthesis of fungal ergot alkaloid. DmaW catalyzes the first step of ergot alkaloid biosynthesis by condensing dimethylallyl diphosphate (DMAP) and tryptophan to form 4-dimethylallyl-L-tryptophan. The second step is catalyzed by the methyltransferase easF that methylates 4-dimethylallyl-L-tryptophan in the presence of S-adenosyl-L-methionine, resulting in the formation of 4-dimethylallyl-L-abrine. The catalase easC and the FAD-dependent oxidoreductase easE then transform 4-dimethylallyl-L-abrine to chanoclavine-I which is further oxidized by easD in the presence of NAD(+), resulting in the formation of chanoclavine-I aldehyde. Agroclavine dehydrogenase easG then mediates the conversion of chanoclavine-I aldehyde to agroclavine via a non-enzymatic adduct reaction: the substrate is an iminium intermediate that is formed spontaneously from chanoclavine-I aldehyde in the presence of glutathione. The presence of easA is not required to complete this reaction. Further conversion of agroclavine to paspalic acid is a two-step process involving oxidation of agroclavine to elymoclavine and of elymoclavine to paspalic acid, the second step being performed by the elymoclavine oxidase cloA. Paspalic acid is then further converted to D-lysergic acid. Ergopeptines are assembled from D-lysergic acid and three different amino acids by the D-lysergyl-peptide-synthetases composed each of a monomudular and a trimodular nonribosomal peptide synthetase subunit. LpsB and lpsC encode the monomodular subunits responsible for D-lysergic acid activation and incorporation into the ergopeptine backbone. LpsA1 and A2 subunits encode the trimodular nonribosomal peptide synthetase assembling the tripeptide portion of ergopeptines. LpsA1 is responsible for formation of the major ergopeptine, ergotamine, and lpsA2 for alpha-ergocryptine, the minor ergopeptine of the total alkaloid mixture elaborated by C.purpurea. D-lysergyl-tripeptides are assembled by the nonribosomal peptide synthetases and released as N-(D-lysergyl-aminoacyl)-lactams. Cyclolization of the D-lysergyl-tripeptides is performed by the Fe(2+)/2-ketoglutarate-dependent dioxygenase easH which introduces a hydroxyl group into N-(D-lysergyl-aminoacyl)-lactam at alpha-C of the aminoacyl residue followed by spontaneous condensation with the terminal lactam carbonyl group. This chain is Chanoclavine-I dehydrogenase easD, found in Claviceps purpurea (Ergot fungus).